A 736-amino-acid polypeptide reads, in one-letter code: Factor of DNA methylation 4 (736 aa).

Basic and acidic residues-rich tracts occupy residues 80 to 90 (RKYLRPRERPR) and 144 to 167 (DSGR…SNED). A disordered region spans residues 80–167 (RKYLRPRERP…KPDPFFSNED (88 aa)). Positions 360–597 (TLVSNLENTL…RSMRELTTRA (238 aa)) form a coiled coil.

Its function is as follows. Acts in association with FDM3 and FDM5 for RNA-directed DNA methylation (RdDM). This Arabidopsis thaliana (Mouse-ear cress) protein is Factor of DNA methylation 4.